The chain runs to 458 residues: Histone acetyltransferase Tip60 homolog (458 aa).

The interval M1–P24 is disordered. The Tudor-knot domain occupies V30–L86. Residues K94–I123 are disordered. The segment covering H101–K116 has biased composition (basic and acidic residues). Residues T168–P446 enclose the MYST-type HAT domain. A C2HC MYST-type zinc finger spans residues I201 to M226. K268 bears the N6-acetyllysine; by autocatalysis mark. Residues I311–V313 and Q318–S324 each bind acetyl-CoA. The active-site Proton donor/acceptor is E344. Residues S348 and S357 each coordinate acetyl-CoA.

Belongs to the MYST (SAS/MOZ) family. Interacts with transcription-associated protein trr-1. Probably a component of a complex with histone acetyltransferase (HAT) activity, at least composed of mys-1 and trr-1. Autoacetylation at Lys-268 is required for binding histones with high affinity and for proper function.

It is found in the nucleus. It carries out the reaction L-lysyl-[protein] + acetyl-CoA = N(6)-acetyl-L-lysyl-[protein] + CoA + H(+). Probable catalytic subunit of the Tip60 chromatin-remodeling complex. Plays a role in acetylation of nucleosomal histone H4 and perhaps also H2A, probably acting as a component of the Tip60 histone acetyltransferase complex. Acts in the determination of vulval and distal tip cell (DTC) precursor cell fates. Involved in the positive regulation of transcription factor daf-16, probably acting by histone acetylation; thereby modulating stress resistance. The sequence is that of Histone acetyltransferase Tip60 homolog from Caenorhabditis elegans.